The following is a 349-amino-acid chain: N-acetyl-gamma-glutamyl-phosphate reductase (349 aa).

Cys152 is a catalytic residue.

It belongs to the NAGSA dehydrogenase family. Type 1 subfamily.

It localises to the cytoplasm. It catalyses the reaction N-acetyl-L-glutamate 5-semialdehyde + phosphate + NADP(+) = N-acetyl-L-glutamyl 5-phosphate + NADPH + H(+). It functions in the pathway amino-acid biosynthesis; L-arginine biosynthesis; N(2)-acetyl-L-ornithine from L-glutamate: step 3/4. Functionally, catalyzes the NADPH-dependent reduction of N-acetyl-5-glutamyl phosphate to yield N-acetyl-L-glutamate 5-semialdehyde. The sequence is that of N-acetyl-gamma-glutamyl-phosphate reductase from Clavibacter sepedonicus (Clavibacter michiganensis subsp. sepedonicus).